A 283-amino-acid chain; its full sequence is GTPase Era (283 aa).

The region spanning 7–175 (YCGHVIIVGK…KNIIKSYLPE (169 aa)) is the Era-type G domain. Positions 15–22 (GKANVGKS) are G1. 15 to 22 (GKANVGKS) provides a ligand contact to GTP. The interval 41–45 (NTTQS) is G2. The tract at residues 62-65 (DTPG) is G3. GTP-binding positions include 62–66 (DTPGV) and 124–127 (NKID). The tract at residues 124–127 (NKID) is G4. Residues 154-156 (ISA) form a G5 region. Residues 198–283 (IREQLILFLG…HLVLWVKDKN (86 aa)) enclose the KH type-2 domain.

It belongs to the TRAFAC class TrmE-Era-EngA-EngB-Septin-like GTPase superfamily. Era GTPase family. Monomer.

It is found in the cytoplasm. Its subcellular location is the cell membrane. An essential GTPase that binds both GDP and GTP, with rapid nucleotide exchange. Plays a role in 16S rRNA processing and 30S ribosomal subunit biogenesis and possibly also in cell cycle regulation and energy metabolism. In Buchnera aphidicola subsp. Acyrthosiphon pisum (strain Tuc7), this protein is GTPase Era.